The primary structure comprises 245 residues: MTLTASSSSRAVTNSPVVVALDYHNRDAAMAFVDKIDPRDCRLKVGKEMFTLFGPQFVSELQQRGFDIFLDLKFHDIPNTAAHAVAAAADLGVWMVNVHASGGARMMAAAREALVPFGKDAPLLIAVTVLTSMEASDLADLGVTLSPADYAERLAALTQKCGLDGVVCSAQEAVRFKQVFGQEFKLVTPGIRPQGSDAGDQRRIMTPEQALAAGVDYMVIGRPVTQSVDPAQTLKAINASLQRSA.

Residues aspartate 22, lysine 44, 71 to 80 (DLKFHDIPNT), threonine 131, arginine 192, glutamine 201, glycine 221, and arginine 222 contribute to the substrate site. Lysine 73 (proton donor) is an active-site residue.

This sequence belongs to the OMP decarboxylase family. Type 1 subfamily. Homodimer.

It carries out the reaction orotidine 5'-phosphate + H(+) = UMP + CO2. The protein operates within pyrimidine metabolism; UMP biosynthesis via de novo pathway; UMP from orotate: step 2/2. Catalyzes the decarboxylation of orotidine 5'-monophosphate (OMP) to uridine 5'-monophosphate (UMP). The polypeptide is Orotidine 5'-phosphate decarboxylase (Escherichia coli O6:K15:H31 (strain 536 / UPEC)).